Here is a 288-residue protein sequence, read N- to C-terminus: Hypersensitive-induced response protein-like protein 1 (288 aa).

Residue Gly-2 is the site of N-myristoyl glycine attachment.

Positive regulator of hypersensitive response (HR)-like cell death. May be involved in potassium ion channel regulation. This Oryza sativa subsp. japonica (Rice) protein is Hypersensitive-induced response protein-like protein 1.